The following is a 364-amino-acid chain: Alanine racemase (364 aa).

The Proton acceptor; specific for D-alanine role is filled by lysine 34. An N6-(pyridoxal phosphate)lysine modification is found at lysine 34. Substrate is bound at residue arginine 129. Tyrosine 259 acts as the Proton acceptor; specific for L-alanine in catalysis. Position 307 (methionine 307) interacts with substrate.

Belongs to the alanine racemase family. The cofactor is pyridoxal 5'-phosphate.

The enzyme catalyses L-alanine = D-alanine. It participates in amino-acid biosynthesis; D-alanine biosynthesis; D-alanine from L-alanine: step 1/1. In terms of biological role, catalyzes the interconversion of L-alanine and D-alanine. May also act on other amino acids. The chain is Alanine racemase (alr) from Coxiella burnetii (strain CbuK_Q154) (Coxiella burnetii (strain Q154)).